The chain runs to 567 residues: Dihydroxy-acid dehydratase 2 (567 aa).

Cys-56 contributes to the [2Fe-2S] cluster binding site. Asp-88 provides a ligand contact to Mg(2+). Cys-129 serves as a coordination point for [2Fe-2S] cluster. Mg(2+)-binding residues include Asp-130 and Lys-131. Lys-131 carries the post-translational modification N6-carboxylysine. Residue Cys-206 participates in [2Fe-2S] cluster binding. Glu-457 is a binding site for Mg(2+). Ser-483 (proton acceptor) is an active-site residue.

It belongs to the IlvD/Edd family. In terms of assembly, homodimer. [2Fe-2S] cluster is required as a cofactor. Mg(2+) serves as cofactor.

It carries out the reaction (2R)-2,3-dihydroxy-3-methylbutanoate = 3-methyl-2-oxobutanoate + H2O. It catalyses the reaction (2R,3R)-2,3-dihydroxy-3-methylpentanoate = (S)-3-methyl-2-oxopentanoate + H2O. It functions in the pathway amino-acid biosynthesis; L-isoleucine biosynthesis; L-isoleucine from 2-oxobutanoate: step 3/4. It participates in amino-acid biosynthesis; L-valine biosynthesis; L-valine from pyruvate: step 3/4. Functionally, functions in the biosynthesis of branched-chain amino acids. Catalyzes the dehydration of (2R,3R)-2,3-dihydroxy-3-methylpentanoate (2,3-dihydroxy-3-methylvalerate) into 2-oxo-3-methylpentanoate (2-oxo-3-methylvalerate) and of (2R)-2,3-dihydroxy-3-methylbutanoate (2,3-dihydroxyisovalerate) into 2-oxo-3-methylbutanoate (2-oxoisovalerate), the penultimate precursor to L-isoleucine and L-valine, respectively. This chain is Dihydroxy-acid dehydratase 2, found in Corynebacterium efficiens (strain DSM 44549 / YS-314 / AJ 12310 / JCM 11189 / NBRC 100395).